Here is a 491-residue protein sequence, read N- to C-terminus: UDP-GalNAc:beta-1,3-N-acetylgalactosaminyltransferase 2 (491 aa).

The Cytoplasmic portion of the chain corresponds to 1–2; sequence MR. Residues 3 to 23 traverse the membrane as a helical; Signal-anchor for type II membrane protein segment; sequence SAAAALSVCVLAVLLHWICWT. At 24 to 491 the chain is on the lumenal side; it reads DRSAELLGFR…NKCGDPCGCS (468 aa). N-linked (GlcNAc...) asparagine glycosylation is found at N167 and N230.

It belongs to the glycosyltransferase 31 family.

The protein resides in the golgi apparatus membrane. It localises to the endoplasmic reticulum. The enzyme catalyses 3-O-(N-acetyl-beta-D-glucosaminyl-(1-&gt;4)-alpha-D-mannosyl)-L-threonyl-[protein] + UDP-N-acetyl-alpha-D-galactosamine = 3-O-[beta-D-GalNAc-(1-&gt;3)-beta-D-GlcNAc-(1-&gt;4)-alpha-D-Man]-L-Thr-[protein] + UDP + H(+). The protein operates within protein modification; protein glycosylation. Beta-1,3-N-acetylgalactosaminyltransferase that synthesizes a unique carbohydrate structure, GalNAc-beta-1-3GlcNAc, on N- and O-glycans. Has no galactose nor galactosaminyl transferase activity toward any acceptor substrate. Involved in alpha-dystroglycan (dag1) glycosylation. The polypeptide is UDP-GalNAc:beta-1,3-N-acetylgalactosaminyltransferase 2 (b3galnt2) (Danio rerio (Zebrafish)).